The following is a 35-amino-acid chain: Jingzhaotoxin F5-21.66 (35 aa).

Intrachain disulfides connect C2–C16, C9–C21, and C15–C29.

This sequence belongs to the neurotoxin 10 (Hwtx-1) family. 48 (Jztx-F5) subfamily. As to expression, expressed by the venom gland.

The protein resides in the secreted. Probable ion channel inhibitor. This Chilobrachys guangxiensis (Chinese earth tiger tarantula) protein is Jingzhaotoxin F5-21.66.